The primary structure comprises 186 residues: Dirigent protein 7 (186 aa).

The first 21 residues, M1 to A21, serve as a signal peptide directing secretion. Residues N70, N91, and N126 are each glycosylated (N-linked (GlcNAc...) asparagine).

The protein belongs to the plant dirigent protein family. In terms of assembly, homodimer.

The protein localises to the secreted. It localises to the extracellular space. The protein resides in the apoplast. Its function is as follows. Dirigent proteins impart stereoselectivity on the phenoxy radical-coupling reaction, yielding optically active lignans from two molecules of coniferyl alcohol in the biosynthesis of lignans, flavonolignans, and alkaloids and thus plays a central role in plant secondary metabolism. In Arabidopsis thaliana (Mouse-ear cress), this protein is Dirigent protein 7 (DIR7).